The sequence spans 1888 residues: Fatty acid synthase subunit alpha (1888 aa).

A disordered region spans residues D98–A118. In terms of domain architecture, Carrier spans V146 to S221. S181 carries the post-translational modification O-(pantetheine 4'-phosphoryl)serine. Positions D675 to G874 are beta-ketoacyl reductase. The Ketosynthase family 3 (KS3) domain occupies K1119–H1657. Active-site for beta-ketoacyl synthase activity residues include C1305, H1542, and H1583. Mg(2+) contacts are provided by D1774, V1775, and E1776. Acetyl-CoA is bound by residues D1774 to E1776, Y1800, S1810, E1819 to S1829, R1843 to G1846, and I1873 to H1875. Mg(2+) contacts are provided by S1874 and H1875.

This sequence belongs to the thiolase-like superfamily. Fungal fatty acid synthetase subunit alpha family. Fatty acid synthase is composed of alpha and beta subunits.

It catalyses the reaction acetyl-CoA + n malonyl-CoA + 2n NADPH + 4n H(+) = a long-chain-acyl-CoA + n CoA + n CO2 + 2n NADP(+).. It carries out the reaction a fatty acyl-[ACP] + malonyl-[ACP] + H(+) = a 3-oxoacyl-[ACP] + holo-[ACP] + CO2. The enzyme catalyses a (3R)-hydroxyacyl-[ACP] + NADP(+) = a 3-oxoacyl-[ACP] + NADPH + H(+). Functionally, fatty acid synthetase catalyzes the formation of long-chain fatty acids from acetyl-CoA, malonyl-CoA and NADPH. The alpha subunit contains domains for: acyl carrier protein, 3-oxoacyl-[acyl-carrier-protein] reductase, and 3-oxoacyl-[acyl-carrier-protein] synthase. In this species, higher amounts of C18 than C16 fatty acids are produced. This Lachancea kluyveri (Yeast) protein is Fatty acid synthase subunit alpha (FAS2).